A 130-amino-acid polypeptide reads, in one-letter code: Small ribosomal subunit protein uS11c (130 aa).

It belongs to the universal ribosomal protein uS11 family. Part of the 30S ribosomal subunit.

The protein resides in the plastid. The polypeptide is Small ribosomal subunit protein uS11c (Aneura mirabilis (Parasitic liverwort)).